We begin with the raw amino-acid sequence, 778 residues long: Zinc finger protein 749 (778 aa).

A KRAB domain is found at 8–101 (MVFEDVAIYF…ILKDILHLAE (94 aa)). Residues 152-174 (FTCTQGGKDFTASSDLLQQQVLN) form a C2H2-type 1; degenerate zinc finger. A C2H2-type 2; degenerate zinc finger spans residues 196–218 (FNSSQGGKDFCHQHGLFEHQKTH). The C2H2-type 3; degenerate zinc finger occupies 224–246 (YEFSECGELFRYNSNLIKYQQNH). Residues 252 to 274 (YEGTEYGKTFIRKSNLVQHQKIH) form a C2H2-type 4; degenerate zinc finger. C2H2-type zinc fingers lie at residues 298 to 320 (YECT…QKTH), 326 to 348 (YECN…QKVH), 354 to 376 (YECS…QRVH), 382 to 404 (FECS…QRVH), 410 to 432 (YKCS…LKIH), and 438 to 460 (YECT…QKIH). Lys466 carries the N6-acetyllysine modification. 2 consecutive C2H2-type zinc fingers follow at residues 483-505 (YTCS…QKIH) and 511-533 (YECT…EKIH). Lys539 carries the N6-acetyllysine modification. A C2H2-type 13; degenerate zinc finger spans residues 556-578 (YVCSECGKAFLTQAHLDGHQKIQ). 3 C2H2-type zinc fingers span residues 584-606 (YECN…QRIH), 612-634 (YKCS…QKVH), and 640-662 (YECS…QRVH). The C2H2-type 17; atypical zinc finger occupies 668–690 (YECSNCGKFLRYRSTFIKHHKVC). The C2H2-type 18 zinc-finger motif lies at 696–718 (HECSKCRELFRTKSSLIIHQQSH). A C2H2-type 19; degenerate zinc finger spans residues 751-773 (YECGESSKVFKYNSSLIKHQIIH). Glycyl lysine isopeptide (Lys-Gly) (interchain with G-Cter in SUMO2) cross-links involve residues Lys761 and Lys768.

It belongs to the krueppel C2H2-type zinc-finger protein family.

Its subcellular location is the nucleus. May be involved in transcriptional regulation. This Homo sapiens (Human) protein is Zinc finger protein 749 (ZNF749).